The primary structure comprises 154 residues: uncharacterized protein (154 aa).

The HTH marR-type domain maps to 7 to 143 (RSELEKTAVQ…IFSFVGKAAD (137 aa)). The segment at residues 57–80 (AGELGKKTGLSTGSVTALVDRLEK) is a DNA-binding region (H-T-H motif).

This is an uncharacterized protein from Bacillus subtilis (strain 168).